The sequence spans 272 residues: Formamidopyrimidine-DNA glycosylase (272 aa).

The active-site Schiff-base intermediate with DNA is Pro2. The active-site Proton donor is the Glu3. The Proton donor; for beta-elimination activity role is filled by Lys58. Residues His94, Arg112, and Arg153 each coordinate DNA. The FPG-type zinc-finger motif lies at 238 to 272; it reads FVYDRAGEPCRVCGAPIRQIVQGQRSTYFCPNCQR. Arg262 (proton donor; for delta-elimination activity) is an active-site residue.

Belongs to the FPG family. Monomer. It depends on Zn(2+) as a cofactor.

It catalyses the reaction Hydrolysis of DNA containing ring-opened 7-methylguanine residues, releasing 2,6-diamino-4-hydroxy-5-(N-methyl)formamidopyrimidine.. It carries out the reaction 2'-deoxyribonucleotide-(2'-deoxyribose 5'-phosphate)-2'-deoxyribonucleotide-DNA = a 3'-end 2'-deoxyribonucleotide-(2,3-dehydro-2,3-deoxyribose 5'-phosphate)-DNA + a 5'-end 5'-phospho-2'-deoxyribonucleoside-DNA + H(+). Functionally, involved in base excision repair of DNA damaged by oxidation or by mutagenic agents. Acts as a DNA glycosylase that recognizes and removes damaged bases. Has a preference for oxidized purines, such as 7,8-dihydro-8-oxoguanine (8-oxoG). Has AP (apurinic/apyrimidinic) lyase activity and introduces nicks in the DNA strand. Cleaves the DNA backbone by beta-delta elimination to generate a single-strand break at the site of the removed base with both 3'- and 5'-phosphates. This chain is Formamidopyrimidine-DNA glycosylase, found in Burkholderia mallei (strain NCTC 10229).